The following is a 414-amino-acid chain: COUP transcription factor 2 (414 aa).

Residues 1–72 (MAMVVSTWRD…PGGPGSDKQQ (72 aa)) form a disordered region. The span at 27–37 (PPVPGPPPGAP) shows a compositional bias: pro residues. Low complexity predominate over residues 38–57 (HTPQTPGQGGPASTPAQTAA). Threonine 51 carries the post-translational modification Phosphothreonine. Over residues 58-67 (GGQGGPGGPG) the composition is skewed to gly residues. The nuclear receptor DNA-binding region spans 76–151 (HIECVVCGDK…VGMRREAVQR (76 aa)). NR C4-type zinc fingers lie at residues 79-99 (CVVCGDKSSGKHYGQFTCEGC) and 115-139 (CRANRNCPIDQHHRNQCQYCRLKKC). Residues 117–414 (ANRNCPIDQH…SFNWPYMAIQ (298 aa)) form an interaction with ZFPM2 region. The NR LBD domain occupies 177–403 (YLSGYISLLL…TLIRDMLLSG (227 aa)). The important for dimerization stretch occupies residues 337-414 (LQEKSQCALE…SFNWPYMAIQ (78 aa)).

It belongs to the nuclear hormone receptor family. NR2 subfamily. Interacts with SQSTM1. Binds DNA as a dimer; homodimer or heterodimer with NR2F6. Interacts with NCOA1, NCOA2, NCOA3 and PPARGC1A. Interacts with ZFPM2.

It is found in the nucleus. Its function is as follows. Ligand-activated transcription factor. Activated by high concentrations of 9-cis-retinoic acid and all-trans-retinoic acid, but not by dexamethasone, cortisol or progesterone (in vitro). Regulation of the apolipoprotein A-I gene transcription. Binds to DNA site A. May be required to establish ovary identity during early gonad development. This chain is COUP transcription factor 2 (NR2F2), found in Bos taurus (Bovine).